Reading from the N-terminus, the 838-residue chain is MQEQEIGLLSKYNEGLCINTDPNSILMSILDMSLHRQMGSDRDLQSSASSVSLPSVKKAPKKRRISIGSLFRRKKENKRKSRELNGGVDGIASIESIHSEMCTDKNSIFSTNTSSDNGLTSISKQIGDFIECPLCLLRHSKDRFPEIMTCHHRSCVDCLRQYLRIEISESRVNISCPECTERFNPHDIRLILSDDVLMEKYEEFMLRRWLVADPDCRWCPAPDCGYAVIAFGCASCPKLTCGREGCGTEFCYHCKQIWHPNQTCDAARQERAQSLRLRTIRSSSISYSQESGAAADDIKPCPRCAAYIIKMNDGSCNHMTCAVCGCEFCWLCMKEISDLHYLSPSGCTFWGKKPWSRKKKILWQLGTLVGAPVGIALIAGIAIPAMIIGIPVYVGRKIHNRYEGKDVSKHKRNLAIAGGVTLSVIVSPVVAAVTVGIGVPIMLAYVYGVVPISLCRSGGCGVSAGNGKGVRIEFDDENDINVGGTNTAVDTTSVAEARHNPSIGEGSVGGLTGSLSASGSHMDRIGAIRDNLSETASTMALAGASITGSLSGSAMVNCFNRLEVQADVQKERYSLSGESGTVSLGTVSDNASTKAMAGSILNSYIPLDKEGNSMEVQVDIESKPSKFRHNSGSSSVDDGSAARSHPGGLSGGLPEGKSSATKWSKEATAGKKSKSGKLRKKSNMKINETREDMDAQLLEQQSTNSSEFEAPSLSDSMPSVADSHSSHFSEFSCSDLESMKTSCSHGSTDYHARFATVNILPEVENDRLENSPHQCSISVLTKTASCSEDPQLNHIAEEHSNNGIRPNVDLYFGNALKETNNNHSHQTMELKVAIQTDI.

The tract at residues 128–351 (DFIECPLCLL…LSPSGCTFWG (224 aa)) is TRIAD supradomain. Positions 132, 135, 150, 152, 155, 158, 176, 179, 219, 224, 241, 246, 251, 254, 259, 264, 301, and 304 each coordinate Zn(2+). The RING-type 1 zinc-finger motif lies at 132-179 (CPLCLLRHSKDRFPEIMTCHHRSCVDCLRQYLRIEISESRVNISCPEC). The IBR-type zinc finger occupies 199–264 (EKYEEFMLRR…KQIWHPNQTC (66 aa)). Residues 301 to 332 (CPRCAAYIIKMNDGSCNHMTCAVCGCEFCWLC) form an RING-type 2; atypical zinc finger. Cys316 is an active-site residue. Positions 321, 324, 329, 332, 340, and 347 each coordinate Zn(2+). 2 helical membrane-spanning segments follow: residues 368–388 (LVGAPVGIALIAGIAIPAMII) and 424–444 (VIVSPVVAAVTVGIGVPIMLA). Disordered stretches follow at residues 622-685 (SKPS…SNMK) and 700-721 (QQSTNSSEFEAPSLSDSMPSVA). Position 631 is a phosphoserine (Ser631). Residues 631 to 644 (SGSSSVDDGSAARS) are compositionally biased toward low complexity. Residues 660–838 (ATKWSKEATA…ELKVAIQTDI (179 aa)) form an interaction with CASR region. Positions 671-683 (KKSKSGKLRKKSN) are enriched in basic residues. Residues 700 to 717 (QQSTNSSEFEAPSLSDSM) are compositionally biased toward polar residues.

This sequence belongs to the RBR family. RNF19 subfamily. Interacts with UBE2L3 and UBE2L6. Also interacts with transcription factor Sp1. Interacts with SNCAIP, CASR and VCP.

Its subcellular location is the membrane. It localises to the cytoplasm. It is found in the cytoskeleton. The protein resides in the microtubule organizing center. The protein localises to the centrosome. It carries out the reaction [E2 ubiquitin-conjugating enzyme]-S-ubiquitinyl-L-cysteine + [acceptor protein]-L-lysine = [E2 ubiquitin-conjugating enzyme]-L-cysteine + [acceptor protein]-N(6)-ubiquitinyl-L-lysine.. The protein operates within protein modification; protein ubiquitination. E3 ubiquitin-protein ligase which accepts ubiquitin from E2 ubiquitin-conjugating enzymes UBE2L3 and UBE2L6 in the form of a thioester and then directly transfers the ubiquitin to targeted substrates, such as SNCAIP or CASR. In Sus scrofa (Pig), this protein is E3 ubiquitin-protein ligase RNF19A (RNF19A).